The following is a 327-amino-acid chain: Tagatose 1,6-diphosphate aldolase 2 (327 aa).

This sequence belongs to the aldolase LacD family.

It catalyses the reaction D-tagatofuranose 1,6-bisphosphate = D-glyceraldehyde 3-phosphate + dihydroxyacetone phosphate. The protein operates within carbohydrate metabolism; D-tagatose 6-phosphate degradation; D-glyceraldehyde 3-phosphate and glycerone phosphate from D-tagatose 6-phosphate: step 2/2. The polypeptide is Tagatose 1,6-diphosphate aldolase 2 (lacD2) (Streptococcus pyogenes serotype M3 (strain ATCC BAA-595 / MGAS315)).